The following is an 85-amino-acid chain: CDC42 small effector protein homolog (85 aa).

S-palmitoyl cysteine attachment occurs at residues Cys14 and Cys15. In terms of domain architecture, CRIB spans 37–50 (IGNPTNFVHTGHIG). Phosphoserine is present on residues Ser78 and Ser81.

This sequence belongs to the CDC42SE/SPEC family.

It is found in the cytoplasm. It localises to the cytoskeleton. Its subcellular location is the cell membrane. Its function is as follows. Probably involved in the organization of the actin cytoskeleton by acting downstream of CDC42, inducing actin filament assembly. The polypeptide is CDC42 small effector protein homolog (Spec2) (Drosophila melanogaster (Fruit fly)).